A 199-amino-acid chain; its full sequence is Elongation factor Ts (199 aa).

The segment at 82 to 85 (TDFV) is involved in Mg(2+) ion dislocation from EF-Tu.

This sequence belongs to the EF-Ts family.

The protein localises to the cytoplasm. Functionally, associates with the EF-Tu.GDP complex and induces the exchange of GDP to GTP. It remains bound to the aminoacyl-tRNA.EF-Tu.GTP complex up to the GTP hydrolysis stage on the ribosome. This Leptospira borgpetersenii serovar Hardjo-bovis (strain JB197) protein is Elongation factor Ts.